A 375-amino-acid chain; its full sequence is Succinyl-diaminopimelate desuccinylase (375 aa).

Position 66 (His66) interacts with Zn(2+). Residue Asp68 is part of the active site. Asp99 lines the Zn(2+) pocket. The Proton acceptor role is filled by Glu133. Zn(2+)-binding residues include Glu134, Glu162, and His348.

The protein belongs to the peptidase M20A family. DapE subfamily. In terms of assembly, homodimer. Zn(2+) is required as a cofactor. It depends on Co(2+) as a cofactor.

The catalysed reaction is N-succinyl-(2S,6S)-2,6-diaminopimelate + H2O = (2S,6S)-2,6-diaminopimelate + succinate. It participates in amino-acid biosynthesis; L-lysine biosynthesis via DAP pathway; LL-2,6-diaminopimelate from (S)-tetrahydrodipicolinate (succinylase route): step 3/3. Catalyzes the hydrolysis of N-succinyl-L,L-diaminopimelic acid (SDAP), forming succinate and LL-2,6-diaminopimelate (DAP), an intermediate involved in the bacterial biosynthesis of lysine and meso-diaminopimelic acid, an essential component of bacterial cell walls. The sequence is that of Succinyl-diaminopimelate desuccinylase from Shigella dysenteriae serotype 1 (strain Sd197).